The following is a 318-amino-acid chain: UDP-N-acetylenolpyruvoylglucosamine reductase (318 aa).

One can recognise an FAD-binding PCMH-type domain in the interval Val-39–Gly-202. The active site involves Arg-182. Positions Asp-214–Pro-223 are enriched in basic and acidic residues. The interval Asp-214 to Asn-235 is disordered. Ser-231 functions as the Proton donor in the catalytic mechanism. Glu-301 is a catalytic residue.

The protein belongs to the MurB family. It depends on FAD as a cofactor.

The protein resides in the cytoplasm. It catalyses the reaction UDP-N-acetyl-alpha-D-muramate + NADP(+) = UDP-N-acetyl-3-O-(1-carboxyvinyl)-alpha-D-glucosamine + NADPH + H(+). Its pathway is cell wall biogenesis; peptidoglycan biosynthesis. Cell wall formation. This chain is UDP-N-acetylenolpyruvoylglucosamine reductase, found in Anaeromyxobacter sp. (strain Fw109-5).